A 132-amino-acid chain; its full sequence is Small ribosomal subunit protein uS8 (132 aa).

Belongs to the universal ribosomal protein uS8 family. Part of the 30S ribosomal subunit. Contacts proteins S5 and S12.

In terms of biological role, one of the primary rRNA binding proteins, it binds directly to 16S rRNA central domain where it helps coordinate assembly of the platform of the 30S subunit. The protein is Small ribosomal subunit protein uS8 of Rhodococcus jostii (strain RHA1).